The following is a 107-amino-acid chain: Putative ankyrin repeat protein RP714 (107 aa).

ANK repeat units follow at residues 7 to 36 (PPLSPLIIAVLNGNIEYTSELLQNGVDIDV), 40 to 69 (NGNSALHIAASKGYTKIATMLLLYGATIDA), and 73 to 102 (ELATPLHYAAANNYKDLTQYLLNMNANKSA).

The protein is Putative ankyrin repeat protein RP714 of Rickettsia prowazekii (strain Madrid E).